The chain runs to 240 residues: Aliphatic sulfonates import ATP-binding protein SsuB (240 aa).

One can recognise an ABC transporter domain in the interval 6–227; sequence IQLSKLRKNF…VKDRHFACFE (222 aa). 38 to 45 lines the ATP pocket; the sequence is GESGCGKS.

This sequence belongs to the ABC transporter superfamily. Aliphatic sulfonates importer (TC 3.A.1.17.2) family. The complex is composed of two ATP-binding proteins (SsuB), two transmembrane proteins (SsuC) and a solute-binding protein (SsuA).

It localises to the cell inner membrane. It catalyses the reaction ATP + H2O + aliphatic sulfonate-[sulfonate-binding protein]Side 1 = ADP + phosphate + aliphatic sulfonateSide 2 + [sulfonate-binding protein]Side 1.. Functionally, part of the ABC transporter complex SsuABC involved in aliphatic sulfonates import. Responsible for energy coupling to the transport system. The protein is Aliphatic sulfonates import ATP-binding protein SsuB of Zymomonas mobilis subsp. mobilis (strain ATCC 31821 / ZM4 / CP4).